The primary structure comprises 338 residues: Phosphonates-binding periplasmic protein (338 aa).

Positions 1–26 are cleaved as a signal peptide; it reads MNAKIIASLAFTSMFSLSTLLSPAHA.

This sequence belongs to the phosphate/phosphite/phosphonate binding protein family. In terms of assembly, the complex is composed of two ATP-binding proteins (PhnC), two transmembrane proteins (PhnE) and a solute-binding protein (PhnD).

The protein resides in the periplasm. Its function is as follows. Phosphonate binding protein that is part of the phosphonate uptake system. Exhibits high affinity for 2-aminoethylphosphonate, and somewhat less affinity to ethylphosphonate, methylphosphonate, phosphonoacetate and phenylphosphonate. The polypeptide is Phosphonates-binding periplasmic protein (phnD) (Escherichia coli (strain K12)).